The chain runs to 88 residues: Putative membrane protein insertion efficiency factor (88 aa).

Belongs to the UPF0161 family.

The protein resides in the cell inner membrane. Its function is as follows. Could be involved in insertion of integral membrane proteins into the membrane. This Synechococcus sp. (strain CC9311) protein is Putative membrane protein insertion efficiency factor.